A 161-amino-acid chain; its full sequence is Arachidonate 5-lipoxygenase-activating protein (161 aa).

Residues 1–8 are Lumenal-facing; it reads MDQEAVGN. Residues 9-30 traverse the membrane as a helical segment; the sequence is VVLLAIVTLISVVQNAFFAHKV. At 31–52 the chain is on the cytoplasmic side; the sequence is ELESKAQSGRSFQRTGTLAFER. A helical transmembrane segment spans residues 53–77; sequence VYTANQNCVDAYPTFLVVLWTAGLL. Over 78–80 the chain is Lumenal; sequence CSQ. The chain crosses the membrane as a helical span at residues 81–102; it reads VPAAFAGLMYLFVRQKYFVGYL. The Cytoplasmic portion of the chain corresponds to 103-107; sequence GERTQ. The stretch at 108-115 is an intramembrane region; sequence STPGYIFG. Residues 116–128 traverse the membrane as a helical segment; sequence KRIILFLFLMSLA. At 129-161 the chain is on the lumenal side; the sequence is GILNHYLIFFFGSDFENYIRTITTTISPLLLIP.

It belongs to the MAPEG family. As to quaternary structure, homotrimer. Interacts with LTC4S and ALOX5.

It is found in the nucleus membrane. It localises to the endoplasmic reticulum membrane. In terms of biological role, required for leukotriene biosynthesis by ALOX5 (5-lipoxygenase). Anchors ALOX5 to the membrane. Binds arachidonic acid, and could play an essential role in the transfer of arachidonic acid to ALOX5. Binds to MK-886, a compound that blocks the biosynthesis of leukotrienes. The polypeptide is Arachidonate 5-lipoxygenase-activating protein (Alox5ap) (Rattus norvegicus (Rat)).